The chain runs to 298 residues: Dioxygenase aneA (298 aa).

Fe cation contacts are provided by His134, Asp136, and His213.

Belongs to the PhyH family. As to quaternary structure, homodimer. It depends on Fe cation as a cofactor.

The catalysed reaction is aculene D + 2-oxoglutarate + O2 = aculene C + succinate + CO2 + H2O. The enzyme catalyses aculene B + 2-oxoglutarate + O2 = aculene A + succinate + CO2 + H2O. The protein operates within secondary metabolite biosynthesis. Its function is as follows. Dioxygenase; part of the gene cluster that mediates the biosynthesis of aculenes, a unique type of norsesquiterpenes that contain a nordaucane skeleton linked to an L-proline moiety and are of mixed biosynthetic origin. The pathway begins with the synthesis of dauca-4,7-diene by the terpene cyclase aneC using farnesyl pyrophosphate (FPP) as substrate. The cytochrome P450 monooxygenase aneF then performs the initial oxidation at C-12 of dauca-4,7-diene to yield asperaculane D. Asperaculane D is substrate of the cytochrome P450 monooxygenase aneD for C-10 hydroxylation to yield asperaculane E. The cytochrome P450 monooxygenase aneG then converts asperaculane E into aculene D via C-2 oxidation. The monomodular nonribosomal peptide synthase aneB adenylates L-proline and the thiohydrolase aneE transfers this activated L-proline derivative to aculenes D and C to produce respectively aculenes B and A. The dioxygenase aneA converts aculene D into aculene C, and aculene B into aculene A by introducing the 5,6-alkene moiety. Asperculanes A, B, C and F, as well as 14-prolyl asperculane C, might be shunt products of the pathway. The protein is Dioxygenase aneA of Aspergillus aculeatus (strain ATCC 16872 / CBS 172.66 / WB 5094).